The chain runs to 674 residues: Translation factor GUF1, mitochondrial (674 aa).

The N-terminal 33 residues, 1–33 (MLRPWFCFRSCVSLLSNRRQYGFRYLATAEPSK), are a transit peptide targeting the mitochondrion. The segment at 32-51 (SKSEKPAKPVKPAKPMSVQE) is disordered. A tr-type G domain is found at 75 to 257 (QNYRNFSIVA…SIIKNIPAPV (183 aa)). Residues 84–91 (AHVDHGKS), 150–154 (DTPGH), and 204–207 (NKID) each bind GTP.

This sequence belongs to the TRAFAC class translation factor GTPase superfamily. Classic translation factor GTPase family. LepA subfamily.

The protein localises to the mitochondrion inner membrane. The enzyme catalyses GTP + H2O = GDP + phosphate + H(+). In terms of biological role, promotes mitochondrial protein synthesis. May act as a fidelity factor of the translation reaction, by catalyzing a one-codon backward translocation of tRNAs on improperly translocated ribosomes. Binds to mitochondrial ribosomes in a GTP-dependent manner. In Lodderomyces elongisporus (strain ATCC 11503 / CBS 2605 / JCM 1781 / NBRC 1676 / NRRL YB-4239) (Yeast), this protein is Translation factor GUF1, mitochondrial.